We begin with the raw amino-acid sequence, 743 residues long: Serine/threonine-protein kinase GD17699 (743 aa).

A disordered region spans residues 54-78 (NVQEDNSYNRDCDSPVSSSSEPEKE). Doublecortin domains are found at residues 154–240 (LRIK…VEYN) and 309–392 (RIVT…AEDF). The region spanning 473–731 (YTLGRIIGDG…SEDILDHPWT (259 aa)) is the Protein kinase domain. ATP-binding positions include 479–487 (IGDGNFAIV) and Lys-502. The Proton acceptor role is filled by Asp-594.

It belongs to the protein kinase superfamily. CAMK Ser/Thr protein kinase family. CaMK subfamily.

It carries out the reaction L-seryl-[protein] + ATP = O-phospho-L-seryl-[protein] + ADP + H(+). It catalyses the reaction L-threonyl-[protein] + ATP = O-phospho-L-threonyl-[protein] + ADP + H(+). The sequence is that of Serine/threonine-protein kinase GD17699 from Drosophila simulans (Fruit fly).